Here is a 219-residue protein sequence, read N- to C-terminus: Response regulator ArlR (219 aa).

The 114-residue stretch at 3–116 folds into the Response regulatory domain; the sequence is QILIVEDEQN…ELLARIRAIL (114 aa). Aspartate 52 is modified (4-aspartylphosphate). The segment at residues 122–219 is a DNA-binding region (ompR/PhoB-type); it reads KDIIDVNGIT…TVRGVGYVIR (98 aa).

In terms of processing, phosphorylated by ArlS.

The protein localises to the cytoplasm. In terms of biological role, member of the two-component regulatory system ArlS/ArlR involved in the regulation of adhesion, autolysis, multidrug resistance and virulence. The polypeptide is Response regulator ArlR (arlR) (Staphylococcus aureus (strain USA300)).